The chain runs to 269 residues: Tryptophan synthase alpha chain (269 aa).

Active-site proton acceptor residues include Glu-49 and Asp-60.

This sequence belongs to the TrpA family. Tetramer of two alpha and two beta chains.

It carries out the reaction (1S,2R)-1-C-(indol-3-yl)glycerol 3-phosphate + L-serine = D-glyceraldehyde 3-phosphate + L-tryptophan + H2O. The protein operates within amino-acid biosynthesis; L-tryptophan biosynthesis; L-tryptophan from chorismate: step 5/5. Functionally, the alpha subunit is responsible for the aldol cleavage of indoleglycerol phosphate to indole and glyceraldehyde 3-phosphate. In Photobacterium profundum (strain SS9), this protein is Tryptophan synthase alpha chain.